A 570-amino-acid chain; its full sequence is Sulfite reductase [NADPH] hemoprotein beta-component (570 aa).

Residues Cys-434, Cys-440, Cys-479, and Cys-483 each coordinate [4Fe-4S] cluster. Cys-483 is a siroheme binding site.

It belongs to the nitrite and sulfite reductase 4Fe-4S domain family. Alpha(8)-beta(8). The alpha component is a flavoprotein, the beta component is a hemoprotein. Siroheme is required as a cofactor. Requires [4Fe-4S] cluster as cofactor.

It carries out the reaction hydrogen sulfide + 3 NADP(+) + 3 H2O = sulfite + 3 NADPH + 4 H(+). Its pathway is sulfur metabolism; hydrogen sulfide biosynthesis; hydrogen sulfide from sulfite (NADPH route): step 1/1. Its function is as follows. Component of the sulfite reductase complex that catalyzes the 6-electron reduction of sulfite to sulfide. This is one of several activities required for the biosynthesis of L-cysteine from sulfate. In Escherichia coli O6:H1 (strain CFT073 / ATCC 700928 / UPEC), this protein is Sulfite reductase [NADPH] hemoprotein beta-component.